The following is a 156-amino-acid chain: MQLVIAAVGHKMPAWIENGFGEYAKRMPPDCRIHLKEIKPVERSGSKTAETAMALERAKIEAAVPKGARIIALDEHGKDVTSVQLAQLLTQWQQDGRDVTFVIGGADGLDPDFKKKADMLIRISSLTLPHGMVRVMLAEQLYRAWSITQNHPYHRV.

S-adenosyl-L-methionine-binding positions include Leu73, Gly104, and 123–128 (ISSLTL).

This sequence belongs to the RNA methyltransferase RlmH family. As to quaternary structure, homodimer.

Its subcellular location is the cytoplasm. The enzyme catalyses pseudouridine(1915) in 23S rRNA + S-adenosyl-L-methionine = N(3)-methylpseudouridine(1915) in 23S rRNA + S-adenosyl-L-homocysteine + H(+). Its function is as follows. Specifically methylates the pseudouridine at position 1915 (m3Psi1915) in 23S rRNA. The sequence is that of Ribosomal RNA large subunit methyltransferase H from Herminiimonas arsenicoxydans.